The chain runs to 526 residues: GMP synthase [glutamine-hydrolyzing] (526 aa).

One can recognise a Glutamine amidotransferase type-1 domain in the interval 14 to 208; sequence SILIVDFGSQ…VHDICGLAGD (195 aa). The active-site Nucleophile is cysteine 91. Catalysis depends on residues histidine 182 and glutamate 184. The GMPS ATP-PPase domain occupies 209–401; the sequence is WTMAEFRQTK…LGMPDVFVDR (193 aa). An ATP-binding site is contributed by 236 to 242; sequence SGGVDSS.

Homodimer.

It carries out the reaction XMP + L-glutamine + ATP + H2O = GMP + L-glutamate + AMP + diphosphate + 2 H(+). It functions in the pathway purine metabolism; GMP biosynthesis; GMP from XMP (L-Gln route): step 1/1. Functionally, catalyzes the synthesis of GMP from XMP. This Zymomonas mobilis subsp. mobilis (strain ATCC 31821 / ZM4 / CP4) protein is GMP synthase [glutamine-hydrolyzing].